The primary structure comprises 83 residues: NAD(P)H-quinone oxidoreductase subunit L (83 aa).

Helical transmembrane passes span 17-37 and 53-73; these read VLLA…LALL and TAIY…APFI.

It belongs to the complex I NdhL subunit family. In terms of assembly, NDH-1 can be composed of about 15 different subunits; different subcomplexes with different compositions have been identified which probably have different functions.

It localises to the cellular thylakoid membrane. It catalyses the reaction a plastoquinone + NADH + (n+1) H(+)(in) = a plastoquinol + NAD(+) + n H(+)(out). It carries out the reaction a plastoquinone + NADPH + (n+1) H(+)(in) = a plastoquinol + NADP(+) + n H(+)(out). Its function is as follows. NDH-1 shuttles electrons from an unknown electron donor, via FMN and iron-sulfur (Fe-S) centers, to quinones in the respiratory and/or the photosynthetic chain. The immediate electron acceptor for the enzyme in this species is believed to be plastoquinone. Couples the redox reaction to proton translocation, and thus conserves the redox energy in a proton gradient. Cyanobacterial NDH-1 also plays a role in inorganic carbon-concentration. The polypeptide is NAD(P)H-quinone oxidoreductase subunit L (Synechococcus sp. (strain RCC307)).